We begin with the raw amino-acid sequence, 240 residues long: Dihydromonapterin reductase (240 aa).

Tyr-152 acts as the Proton acceptor in catalysis.

The protein belongs to the short-chain dehydrogenases/reductases (SDR) family. FolM subfamily.

The enzyme catalyses (6S)-5,6,7,8-tetrahydrofolate + NADP(+) = 7,8-dihydrofolate + NADPH + H(+). The catalysed reaction is 7,8-dihydromonapterin + NADPH + H(+) = 5,6,7,8-tetrahydromonapterin + NADP(+). Its function is as follows. Catalyzes the reduction of dihydromonapterin to tetrahydromonapterin. Also has lower activity with dihydrofolate. This is Dihydromonapterin reductase (folM) from Escherichia coli O6:H1 (strain CFT073 / ATCC 700928 / UPEC).